Here is a 313-residue protein sequence, read N- to C-terminus: Ribosomal RNA small subunit methyltransferase H (313 aa).

S-adenosyl-L-methionine-binding positions include 35–37 (GGH), D55, F79, D101, and Q108. Residues 276–300 (QGGPTLKSVGKMMPPDDEVADNPRA) form a disordered region.

Belongs to the methyltransferase superfamily. RsmH family.

It is found in the cytoplasm. It carries out the reaction cytidine(1402) in 16S rRNA + S-adenosyl-L-methionine = N(4)-methylcytidine(1402) in 16S rRNA + S-adenosyl-L-homocysteine + H(+). Its function is as follows. Specifically methylates the N4 position of cytidine in position 1402 (C1402) of 16S rRNA. This chain is Ribosomal RNA small subunit methyltransferase H, found in Dickeya chrysanthemi (strain Ech1591) (Dickeya zeae (strain Ech1591)).